The sequence spans 369 residues: Peptide chain release factor 2 (369 aa).

Gln-247 is subject to N5-methylglutamine.

This sequence belongs to the prokaryotic/mitochondrial release factor family. Post-translationally, methylated by PrmC. Methylation increases the termination efficiency of RF2.

The protein localises to the cytoplasm. Functionally, peptide chain release factor 2 directs the termination of translation in response to the peptide chain termination codons UGA and UAA. This Phenylobacterium zucineum (strain HLK1) protein is Peptide chain release factor 2.